Reading from the N-terminus, the 394-residue chain is 1-deoxy-D-xylulose 5-phosphate reductoisomerase (394 aa).

6 residues coordinate NADPH: T12, G13, S14, I15, G38, and N126. Residue K127 participates in 1-deoxy-D-xylulose 5-phosphate binding. E128 contributes to the NADPH binding site. D151 is a Mn(2+) binding site. Residues S152, E153, S177, and H200 each coordinate 1-deoxy-D-xylulose 5-phosphate. E153 contributes to the Mn(2+) binding site. Residue G206 participates in NADPH binding. Residues S213, N218, K219, and E222 each contribute to the 1-deoxy-D-xylulose 5-phosphate site. E222 contacts Mn(2+).

It belongs to the DXR family. Mg(2+) is required as a cofactor. Mn(2+) serves as cofactor.

It carries out the reaction 2-C-methyl-D-erythritol 4-phosphate + NADP(+) = 1-deoxy-D-xylulose 5-phosphate + NADPH + H(+). Its pathway is isoprenoid biosynthesis; isopentenyl diphosphate biosynthesis via DXP pathway; isopentenyl diphosphate from 1-deoxy-D-xylulose 5-phosphate: step 1/6. Functionally, catalyzes the NADPH-dependent rearrangement and reduction of 1-deoxy-D-xylulose-5-phosphate (DXP) to 2-C-methyl-D-erythritol 4-phosphate (MEP). This Beutenbergia cavernae (strain ATCC BAA-8 / DSM 12333 / CCUG 43141 / JCM 11478 / NBRC 16432 / NCIMB 13614 / HKI 0122) protein is 1-deoxy-D-xylulose 5-phosphate reductoisomerase.